The chain runs to 238 residues: Ribonuclease PH (238 aa).

Residues arginine 86 and 124-126 each bind phosphate; that span reads GTR.

The protein belongs to the RNase PH family. In terms of assembly, homohexameric ring arranged as a trimer of dimers.

It carries out the reaction tRNA(n+1) + phosphate = tRNA(n) + a ribonucleoside 5'-diphosphate. Phosphorolytic 3'-5' exoribonuclease that plays an important role in tRNA 3'-end maturation. Removes nucleotide residues following the 3'-CCA terminus of tRNAs; can also add nucleotides to the ends of RNA molecules by using nucleoside diphosphates as substrates, but this may not be physiologically important. Probably plays a role in initiation of 16S rRNA degradation (leading to ribosome degradation) during starvation. This is Ribonuclease PH from Acinetobacter baumannii (strain AB307-0294).